Consider the following 1895-residue polypeptide: Diacylglycerol kinase eta (1895 aa).

Residues 1-10 show a composition bias toward basic and acidic residues; the sequence is MAHLKLDTLH. The tract at residues 1 to 37 is disordered; it reads MAHLKLDTLHVQRSPRGSRRSSPSSGRSSACSSGSIS. Positions 20–37 are enriched in low complexity; that stretch reads RSSPSSGRSSACSSGSIS. The region spanning 82 to 175 is the PH domain; it reads AIIKEGFLLK…WLGSLKTATA (94 aa). Phorbol-ester/DAG-type zinc fingers lie at residues 195–245 and 267–318; these read HHHW…IANC and PHQW…AVAC. Positions 349–485 constitute a DAGKc domain; sequence GNFSPLLVFV…DRWSIMVFEK (137 aa). 4 disordered regions span residues 781–801, 1012–1053, 1113–1137, and 1172–1191; these read ANID…ENTP, TTLC…MARL, QHRG…GANL, and PNTI…HGQD. The span at 1113-1128 shows a compositional bias: basic and acidic residues; that stretch reads QHRGGDNDSDYPEHEQ. Over residues 1172-1184 the composition is skewed to polar residues; the sequence is PNTILTTSTSPTK. Residues 1832–1895 form the SAM domain; the sequence is WSVNEVVTWL…LQAIKDLSEN (64 aa).

This sequence belongs to the eukaryotic diacylglycerol kinase family.

Its subcellular location is the cytoplasm. The catalysed reaction is a 1,2-diacyl-sn-glycerol + ATP = a 1,2-diacyl-sn-glycero-3-phosphate + ADP + H(+). Its function is as follows. Phosphorylates diacylglycerol (DAG) to generate phosphatidic acid (PA). The protein is Diacylglycerol kinase eta of Drosophila melanogaster (Fruit fly).